A 97-amino-acid chain; its full sequence is Citrate lyase acyl carrier protein (97 aa).

Ser14 carries the O-(phosphoribosyl dephospho-coenzyme A)serine modification.

This sequence belongs to the CitD family. Oligomer with a subunit composition of (alpha,beta,gamma)6.

It is found in the cytoplasm. In terms of biological role, covalent carrier of the coenzyme of citrate lyase. This Leuconostoc citreum (strain KM20) protein is Citrate lyase acyl carrier protein.